The chain runs to 222 residues: Peptide methionine sulfoxide reductase MsrA 2 (222 aa).

Residue Cys-56 is part of the active site.

This sequence belongs to the MsrA Met sulfoxide reductase family.

It catalyses the reaction L-methionyl-[protein] + [thioredoxin]-disulfide + H2O = L-methionyl-(S)-S-oxide-[protein] + [thioredoxin]-dithiol. It carries out the reaction [thioredoxin]-disulfide + L-methionine + H2O = L-methionine (S)-S-oxide + [thioredoxin]-dithiol. In terms of biological role, has an important function as a repair enzyme for proteins that have been inactivated by oxidation. Catalyzes the reversible oxidation-reduction of methionine sulfoxide in proteins to methionine. In Nostoc sp. (strain PCC 7120 / SAG 25.82 / UTEX 2576), this protein is Peptide methionine sulfoxide reductase MsrA 2 (msrA2).